A 523-amino-acid chain; its full sequence is 2-isopropylmalate synthase (523 aa).

The Pyruvate carboxyltransferase domain occupies 5–267; that stretch reads VIIFDTTLRD…HTNINHHEIW (263 aa). Positions 14, 202, 204, and 238 each coordinate Mn(2+). The tract at residues 392 to 523 is regulatory domain; the sequence is RLDYFSVQSG…QNKENNKETV (132 aa).

It belongs to the alpha-IPM synthase/homocitrate synthase family. LeuA type 1 subfamily. As to quaternary structure, homodimer. The cofactor is Mn(2+).

The protein localises to the cytoplasm. The enzyme catalyses 3-methyl-2-oxobutanoate + acetyl-CoA + H2O = (2S)-2-isopropylmalate + CoA + H(+). It functions in the pathway amino-acid biosynthesis; L-leucine biosynthesis; L-leucine from 3-methyl-2-oxobutanoate: step 1/4. Functionally, catalyzes the condensation of the acetyl group of acetyl-CoA with 3-methyl-2-oxobutanoate (2-ketoisovalerate) to form 3-carboxy-3-hydroxy-4-methylpentanoate (2-isopropylmalate). This is 2-isopropylmalate synthase from Salmonella newport (strain SL254).